Reading from the N-terminus, the 253-residue chain is Triosephosphate isomerase, cytosolic (253 aa).

Residues asparagine 10 and lysine 12 each coordinate substrate. The active-site Electrophile is the histidine 96. Residue glutamate 166 is the Proton acceptor of the active site.

The protein belongs to the triosephosphate isomerase family. As to quaternary structure, homodimer.

The protein resides in the cytoplasm. The enzyme catalyses D-glyceraldehyde 3-phosphate = dihydroxyacetone phosphate. Its pathway is carbohydrate biosynthesis; gluconeogenesis. It functions in the pathway carbohydrate degradation; glycolysis; D-glyceraldehyde 3-phosphate from glycerone phosphate: step 1/1. This chain is Triosephosphate isomerase, cytosolic, found in Coptis japonica (Japanese goldthread).